The primary structure comprises 325 residues: Olfactory receptor 1S1 (325 aa).

Residues 1 to 38 (MKTFSSFLQIGRNMHQGNQTTITEFILLGFFKQDEHQN) lie on the Extracellular side of the membrane. Asn-18 carries an N-linked (GlcNAc...) asparagine glycan. A helical transmembrane segment spans residues 39-62 (LLFVLFLGMYLVTVIGNGLIIVAI). Residues 63–70 (SLDTYLHT) are Cytoplasmic-facing. A helical membrane pass occupies residues 71–92 (PMYLFLANLSFADISSISNSVP). Topologically, residues 93–113 (KMLVNIQTKSQSISYESCITQ) are extracellular. An intrachain disulfide couples Cys-110 to Cys-202. A helical membrane pass occupies residues 114 to 133 (MYFSIVFVVIDNLLLGTMAY). At 134-152 (DHFVAICHPLNYTILMRPR) the chain is on the cytoplasmic side. The helical transmembrane segment at 153–171 (FGILLTVISWFLSNIIALT) threads the bilayer. Residues 172–208 (HTLLLIQLLFCNHNTLPHFFCDLAPLLKLSCSDTLIN) are Extracellular-facing. Residues 209–232 (ELVLFIVGLSVIIFPFTLSFFSYV) form a helical membrane-spanning segment. At 233–249 (CIIRAVLRVSSTQGKWK) the chain is on the cytoplasmic side. The chain crosses the membrane as a helical span at residues 250–272 (AFSTCGSHLTVVLLFYGTIVGVY). The Extracellular portion of the chain corresponds to 273-285 (FFPSSTHPEDTDK). A helical membrane pass occupies residues 286 to 305 (IGAVLFTVVTPMINPFIYSL). Residues 306-325 (RNKDMKGALRKLINRKISSL) lie on the Cytoplasmic side of the membrane.

It belongs to the G-protein coupled receptor 1 family.

It localises to the cell membrane. Odorant receptor. In Homo sapiens (Human), this protein is Olfactory receptor 1S1 (OR1S1).